The following is a 179-amino-acid chain: Bifunctional protein PyrR (179 aa).

The PRPP-binding signature appears at 100-112 (VILVDDVLFTGRT).

This sequence belongs to the purine/pyrimidine phosphoribosyltransferase family. PyrR subfamily.

The catalysed reaction is UMP + diphosphate = 5-phospho-alpha-D-ribose 1-diphosphate + uracil. In terms of biological role, regulates the transcription of the pyrimidine nucleotide (pyr) operon in response to exogenous pyrimidines. Functionally, also displays a weak uracil phosphoribosyltransferase activity which is not physiologically significant. The chain is Bifunctional protein PyrR from Actinobacillus succinogenes (strain ATCC 55618 / DSM 22257 / CCUG 43843 / 130Z).